We begin with the raw amino-acid sequence, 159 residues long: Ribonuclease H (159 aa).

The RNase H type-1 domain occupies 1-145; it reads MTHIRAIYTD…CDLIARRLSR (145 aa). Aspartate 10, glutamate 49, aspartate 74, and aspartate 137 together coordinate Mg(2+).

This sequence belongs to the RNase H family. As to quaternary structure, monomer. Requires Mg(2+) as cofactor.

The protein resides in the cytoplasm. It carries out the reaction Endonucleolytic cleavage to 5'-phosphomonoester.. Functionally, endonuclease that specifically degrades the RNA of RNA-DNA hybrids. The polypeptide is Ribonuclease H (Thermosynechococcus vestitus (strain NIES-2133 / IAM M-273 / BP-1)).